We begin with the raw amino-acid sequence, 534 residues long: MLNKSFAMYVYVQQFHRDMPPTPVFVYGQSLQTATFPGPTIVARYNVPLYVTWENHLPDAHILPWDPTVPTAIPKNGGVPTVVHLHGAAQAPDSDGHAFAWFTRDFAENGSTWTQKTYTYPNVQPAAGNIWYHDHALGLTRASLLAGLLAAYIVEWPELEMPFNLPSGEFDLHLVIADRKFNVDGTIFMDTVGAVPSVHPQWQPEYFGEVITVNGKAWPFQAVQRRRYRLRILNASNARYLNIRFSNGLPFTVIASDATYLSRPVTVSNLLLSPAEIFDVIVDFSLVVNPNATDIELLNSAPYPFPTGTPANATLDGKVMAFNVSAKWQVGDDMPMQEPENSTVVPEIGVPFAKVTALPPTMKTRYIVLYENMTSNDPNTAKTMNLYINGLRLEDPPTETPISGTTELWHVINLTPDNHPLHLHLAEFQAVQMLQLVDPDTFKSCMLKHNDTFACNLDQHAVGALQPVPEEEKTWKNVVKIPPAYVTSVVVAFRLVHNNMPYPFDATAAPGYVYHCHILDHEDNAMIRPLTLLP.

Cu cation is bound by residues H84 and H86. N-linked (GlcNAc...) asparagine glycosylation is present at N109. Cu cation is bound by residues H133 and H135. The Plastocyanin-like domain occupies 219–291 (PFQAVQRRRY…VDFSLVVNPN (73 aa)). 6 N-linked (GlcNAc...) asparagine glycosylation sites follow: N234, N291, N312, N323, N341, and N372. Cu cation is bound by residues H419, H422, and H424. N450 is a glycosylation site (N-linked (GlcNAc...) asparagine). Residues H515, C516, H517, H521, and M526 each contribute to the Cu cation site.

It belongs to the multicopper oxidase family. It depends on Cu cation as a cofactor. As to expression, expressed in roots and basal stems.

The protein localises to the endoplasmic reticulum membrane. Functionally, multicopper oxidase that may play a role in the maintenance of inorganic phosphate homeostasis. In Oryza sativa subsp. japonica (Rice), this protein is Multicopper oxidase LPR1 homolog 3.